A 273-amino-acid chain; its full sequence is Putative phosphoenolpyruvate synthase regulatory protein (273 aa).

153 to 160 (GVSRSGKT) contributes to the ADP binding site.

It belongs to the pyruvate, phosphate/water dikinase regulatory protein family. PSRP subfamily.

The catalysed reaction is [pyruvate, water dikinase] + ADP = [pyruvate, water dikinase]-phosphate + AMP + H(+). It catalyses the reaction [pyruvate, water dikinase]-phosphate + phosphate + H(+) = [pyruvate, water dikinase] + diphosphate. Its function is as follows. Bifunctional serine/threonine kinase and phosphorylase involved in the regulation of the phosphoenolpyruvate synthase (PEPS) by catalyzing its phosphorylation/dephosphorylation. The protein is Putative phosphoenolpyruvate synthase regulatory protein of Albidiferax ferrireducens (strain ATCC BAA-621 / DSM 15236 / T118) (Rhodoferax ferrireducens).